The chain runs to 387 residues: Growth-regulating factor 3 (387 aa).

The 36-residue stretch at 53–88 folds into the QLQ domain; that stretch reads PFTAAQYEELEQQALIYKYLVAGVPVPADLLLPIRR. Short sequence motifs (bipartite nuclear localization signal) lie at residues 111-129 and 147-154; these read KKLD…KKWR and RGRNRSRK. The WRC domain occupies 114-158; that stretch reads DPEPGRCRRTDGKKWRCSKEAAPDSKYCERHMHRGRNRSRKPVEA. Residues 145–176 form a disordered region; the sequence is MHRGRNRSRKPVEAQLVAPHSQPPATAPAAAV.

This sequence belongs to the GRF family.

It localises to the nucleus. In terms of biological role, transcription activator that plays a regulatory role in gibberellin-induced stem elongation. The protein is Growth-regulating factor 3 (GRF3) of Oryza sativa subsp. japonica (Rice).